The chain runs to 245 residues: Large ribosomal subunit protein uL4 (245 aa).

Positions Met-1–Ala-13 are enriched in polar residues. Disordered regions lie at residues Met-1–Ser-28, Ala-56–Pro-114, and Thr-224–Lys-245. Over residues Gly-59 to Gly-71 the composition is skewed to basic and acidic residues. Residues Gly-72–Gly-83 show a composition bias toward basic residues.

The protein belongs to the universal ribosomal protein uL4 family. In terms of assembly, part of the 50S ribosomal subunit.

One of the primary rRNA binding proteins, this protein initially binds near the 5'-end of the 23S rRNA. It is important during the early stages of 50S assembly. It makes multiple contacts with different domains of the 23S rRNA in the assembled 50S subunit and ribosome. Functionally, forms part of the polypeptide exit tunnel. The chain is Large ribosomal subunit protein uL4 from Frankia casuarinae (strain DSM 45818 / CECT 9043 / HFP020203 / CcI3).